A 300-amino-acid polypeptide reads, in one-letter code: Ribosomal protein bS6--L-glutamate ligase (300 aa).

The region spanning 104–287 (MQLLARQGID…IAGKMIRWIE (184 aa)) is the ATP-grasp domain. Residues Lys141, 178–179 (EY), Asp187, and 211–213 (RSN) contribute to the ATP site. The Mg(2+) site is built by Asp248, Glu260, and Asn262. Mn(2+) is bound by residues Asp248, Glu260, and Asn262.

It belongs to the RimK family. Requires Mg(2+) as cofactor. The cofactor is Mn(2+).

In terms of biological role, an L-glutamate ligase that catalyzes the ATP-dependent post-translational addition of glutamate residues to the C-terminus of ribosomal protein bS6 (RpsF). Is also able to catalyze the synthesis of poly-alpha-glutamate in vitro, via ATP hydrolysis from unprotected glutamate as substrate. The number of glutamate residues added to either RpsF or to poly-alpha-glutamate changes with pH. The chain is Ribosomal protein bS6--L-glutamate ligase from Shigella boydii serotype 4 (strain Sb227).